Reading from the N-terminus, the 547-residue chain is Ganoderic acid synthetase CYP5150L8 (547 aa).

Residues 2–22 (PDSSLVLVAIAGAAYIFWLVF) form a helical membrane-spanning segment. Cysteine 487 is a heme binding site.

It belongs to the cytochrome P450 family. It depends on heme as a cofactor.

Its subcellular location is the membrane. The catalysed reaction is lanosterol + reduced [NADPH--hemoprotein reductase] + O2 = 26-hydroxylanosterol + oxidized [NADPH--hemoprotein reductase] + H2O + H(+). The enzyme catalyses 26-hydroxylanosterol + reduced [NADPH--hemoprotein reductase] + O2 = 26-oxolanosterol + oxidized [NADPH--hemoprotein reductase] + 2 H2O + H(+). It carries out the reaction 26-oxolanosterol + reduced [NADPH--hemoprotein reductase] + O2 = 3beta-hydroxy-lanosta-8, 24-dien-26-oate + oxidized [NADPH--hemoprotein reductase] + H2O + 2 H(+). The protein operates within secondary metabolite biosynthesis; terpenoid biosynthesis. Cytochrome P450 monooxygenase that is involved in the biosynthesis of ganoderic acids (GA), a group of highly oxygenated lanostane-type triterpenoids which well recognized as a main group of unique bioactive compounds in the medicinal mushroom Ganoderma lucidum. CYP5150L8 alone is able to catalyze the three-step oxidations at C-26 from lanosterol to 3-hydroxy-lanosta-8,24-dien-26-oic acid (also called ganoderic acid Z or HLDOA). The methyl group of lanosterol at C-26 is first oxidized into hydroxyl group to form 3-hydroxy-lanosta-8,24-dien-26-ol (HLDO). The hydroxyl group at C-26 of HLDO is further converted into a formyl group to form 3-hydroxy-lanosta-8,24-dien-26-al (HLDA). Finally, the formyl group is oxidized into a carboxyl group to produce 3-hydroxy-lanosta-8,24-dien-26-oic acid (HLDOA). This chain is Ganoderic acid synthetase CYP5150L8, found in Ganoderma lucidum (Ling zhi medicinal fungus).